Reading from the N-terminus, the 1737-residue chain is Myosin-M heavy chain (1737 aa).

The region spanning 4–55 (LEGDIVWVPHTVNGYCRGKIIGYNEKNQVTVRLLELNEEIKINEQLIQNYNQ) is the Myosin N-terminal SH3-like domain. The Myosin motor domain occupies 59–886 (KDFSDMVEIQ…LYIYLEKKRY (828 aa)). Position 154 to 161 (154 to 161 (GESGSGKT)) interacts with ATP. Residues 640-727 (KSNDNNSNNN…NNNSSNNKKS (88 aa)) form a disordered region. 2 stretches are compositionally biased toward low complexity: residues 641–663 (SNDN…SSQS) and 679–724 (NSGS…SSNN). Residues 754–761 (YIRCIKPN) form an actin-binding region. IQ domains lie at 889 to 918 (LVDS…SSLF) and 912 to 941 (NKES…LENK). Residues 926–1039 (QRAKKDFEQL…KKKNEQNLSL (114 aa)) are a coiled coil. Residues 947 to 1028 (RKKELERQRK…IEKKRKEEEK (82 aa)) are compositionally biased toward basic and acidic residues. Disordered regions lie at residues 947 to 1099 (RKKE…PSTK), 1117 to 1199 (LHGS…PNFN), 1266 to 1290 (GINK…ANSS), and 1304 to 1364 (SLST…SNED). A compositionally biased stretch (low complexity) spans 1044–1070 (ITNSPSLINTTTTTTTTTTTTTNTSSP). The segment covering 1071–1081 (PLSPPISPRPS) has biased composition (pro residues). Residues 1082 to 1098 (TPSSTSSSSSTTSSPST) show a composition bias toward low complexity. Over residues 1121–1131 (SHSDKNSKEDN) the composition is skewed to basic and acidic residues. Positions 1132-1141 (NSNNNNNGDS) are enriched in low complexity. Polar residues predominate over residues 1143–1153 (IILSSDSSFGQ). Over residues 1162-1171 (PTPPPPPPLK) the composition is skewed to pro residues. Composition is skewed to polar residues over residues 1180-1198 (GVEN…SPNF) and 1274-1288 (RTIS…SRAN). The segment covering 1304-1359 (SLSTSTTPSTPTTPKTPTTLSSSSVSTSTSLSSVSSSVSSSSSSSIPTPIIESTPS) has biased composition (low complexity). The DH domain occupies 1389-1572 (FRIKIINELI…SDIVQSINEA (184 aa)). In terms of domain architecture, PH spans 1603–1714 (TLLMEGTVSA…WFKQIKALIQ (112 aa)).

This sequence belongs to the TRAFAC class myosin-kinesin ATPase superfamily. Myosin family. Monomer.

The protein resides in the cytoplasm. Myosins are actin-based motor molecules with ATPase activity. Involved in macropinocytosis and remodeling of actin cytoskeleton. In Dictyostelium discoideum (Social amoeba), this protein is Myosin-M heavy chain (myoM).